We begin with the raw amino-acid sequence, 305 residues long: Homeobox protein NANOGP8 (305 aa).

Residues 1–96 (MSVDPACPQS…KEDKVPVKKQ (96 aa)) form a disordered region. The segment covering 65–82 (SPDSSTSPKGKQPTSAEN) has biased composition (polar residues). The segment at residues 95–154 (KQKTRTVFSSTQLCVLNDRFQRQKYLSLQQMQELSNILNLSYKQVKTWFQNQRMKSKRWQ) is a DNA-binding region (homeobox). A run of 8 repeats spans residues 196 to 200 (WSNQT), 201 to 205 (WNNST), 206 to 210 (WSNQT), 216 to 220 (WSNHS), 221 to 225 (WNTQT), 226 to 230 (WCTQS), 231 to 235 (WNNQA), and 236 to 240 (WNSPF). The interval 196-240 (WSNQTWNNSTWSNQTQNIQSWSNHSWNTQTWCTQSWNNQAWNSPF) is 8 X repeats starting with a Trp in each unit. A sufficient for transactivation activity region spans residues 196–240 (WSNQTWNNSTWSNQTQNIQSWSNHSWNTQTWCTQSWNNQAWNSPF). Positions 241-305 (YNCGEESLQS…YSMNMQPEDV (65 aa)) are sufficient for strong transactivation activity.

This sequence belongs to the Nanog homeobox family.

The protein localises to the nucleus. May act as a transcription regulator. When overexpressed, promotes entry of cells into S phase and cell proliferation. This chain is Homeobox protein NANOGP8 (NANOGP8), found in Homo sapiens (Human).